A 284-amino-acid chain; its full sequence is 4-diphosphocytidyl-2-C-methyl-D-erythritol kinase (284 aa).

Lys-14 is an active-site residue. An ATP-binding site is contributed by 97–107; it reads PMGGGLGGGSS. The active site involves Asp-139.

This sequence belongs to the GHMP kinase family. IspE subfamily.

It catalyses the reaction 4-CDP-2-C-methyl-D-erythritol + ATP = 4-CDP-2-C-methyl-D-erythritol 2-phosphate + ADP + H(+). The protein operates within isoprenoid biosynthesis; isopentenyl diphosphate biosynthesis via DXP pathway; isopentenyl diphosphate from 1-deoxy-D-xylulose 5-phosphate: step 3/6. Functionally, catalyzes the phosphorylation of the position 2 hydroxy group of 4-diphosphocytidyl-2C-methyl-D-erythritol. In Psychromonas ingrahamii (strain DSM 17664 / CCUG 51855 / 37), this protein is 4-diphosphocytidyl-2-C-methyl-D-erythritol kinase.